The chain runs to 340 residues: Glycerol-3-phosphate dehydrogenase [NAD(P)+] (340 aa).

NADPH contacts are provided by Trp-11, Arg-33, and Lys-110. Residues Lys-110, Gly-144, and Ser-146 each contribute to the sn-glycerol 3-phosphate site. Ala-148 is a binding site for NADPH. Residues Lys-199, Asp-252, Ser-262, Arg-263, and Asn-264 each contribute to the sn-glycerol 3-phosphate site. Lys-199 serves as the catalytic Proton acceptor. An NADPH-binding site is contributed by Arg-263. Residues Val-287 and Glu-289 each coordinate NADPH.

Belongs to the NAD-dependent glycerol-3-phosphate dehydrogenase family.

It is found in the cytoplasm. The enzyme catalyses sn-glycerol 3-phosphate + NAD(+) = dihydroxyacetone phosphate + NADH + H(+). It carries out the reaction sn-glycerol 3-phosphate + NADP(+) = dihydroxyacetone phosphate + NADPH + H(+). The protein operates within membrane lipid metabolism; glycerophospholipid metabolism. In terms of biological role, catalyzes the reduction of the glycolytic intermediate dihydroxyacetone phosphate (DHAP) to sn-glycerol 3-phosphate (G3P), the key precursor for phospholipid synthesis. In Polynucleobacter necessarius subsp. necessarius (strain STIR1), this protein is Glycerol-3-phosphate dehydrogenase [NAD(P)+].